The chain runs to 479 residues: MDKQPATSWSIHTRPEIIAKYEIFERVGSGAYADVYRARRLSDGLIVALKEIFDYQSAFREIDALTILNGSPNVVVMHEYFWREEENAVLVLEFLRSDLAAVIRDGKRKKKVEGGDGFSVGEIKRWMIQILTGVDACHRNLIVHRDLKPGNMLISDDGVLKLADFGQARILMEHDIVASDENQQAYKLEDKDGETSEPPEVIPDYENSPRQGSDGQEREAMSKDEYFRQVEELKAKQVVRDDTDKDSNVHDGDISCLATCTVSEMDDDLGRNSFSYDADEAVDDTQGLMTSCVGTRWFRPPELLYGSTMYGLEVDLWSLGCVFAELLSLEPLFPGISDIDQISRVTNVLGNLNEEVWPGCVDLPDYKSISFAKVESPLGIEGCLPNHSGDVISLLKKLICYDPASRATTMEMLNDKYLSEEPLPVPVSELYVPPTMSGPDEDSPRKWNDYREMDSDSDFDGFGPMNVKPTSSGFTIEFP.

The Protein kinase domain maps to 21–418 (YEIFERVGSG…TMEMLNDKYL (398 aa)). ATP contacts are provided by residues 27 to 35 (VGSGAYADV) and Lys50. A Phosphotyrosine modification is found at Tyr32. Catalysis depends on Asp146, which acts as the Proton acceptor. Phosphoserine occurs at positions 179, 208, and 247. Residues 187–221 (KLEDKDGETSEPPEVIPDYENSPRQGSDGQEREAM) are disordered. At Thr290 the chain carries Phosphothreonine. Residues 434-479 (PTMSGPDEDSPRKWNDYREMDSDSDFDGFGPMNVKPTSSGFTIEFP) form a disordered region. The span at 442-454 (DSPRKWNDYREMD) shows a compositional bias: basic and acidic residues. Residues 468-479 (KPTSSGFTIEFP) are compositionally biased toward polar residues.

The protein belongs to the protein kinase superfamily. CMGC Ser/Thr protein kinase family. CDC2/CDKX subfamily. As to expression, highly expressed in suspension cell culture. Expressed at low levels in all plant organs.

The enzyme catalyses L-seryl-[protein] + ATP = O-phospho-L-seryl-[protein] + ADP + H(+). It catalyses the reaction L-threonyl-[protein] + ATP = O-phospho-L-threonyl-[protein] + ADP + H(+). It carries out the reaction [DNA-directed RNA polymerase] + ATP = phospho-[DNA-directed RNA polymerase] + ADP + H(+). Its function is as follows. CDK-activating kinase that modulates CDKD-2 and CDKD-3 activities by phosphorylation of the T-loop. Activates CDKD-2 C-terminal domain (CTD) kinase activity. Activates CDKA-1 probably by phosphorylation. Possesses a CDK kinase activity independently of association with cyclin CYCH1-1. Phosphorylates the CTD of the large subunit of RNA polymerase II. The polypeptide is Cyclin-dependent kinase F-1 (CDKF-1) (Arabidopsis thaliana (Mouse-ear cress)).